The primary structure comprises 293 residues: Methoxy mycolic acid synthase MmaA3 (293 aa).

S-adenosyl-L-methionine-binding positions include 39–40 (YS), 78–80 (GCG), 100–105 (TLSKNQ), 129–130 (WA), and Ile142. The active site involves Cys275.

This sequence belongs to the CFA/CMAS family.

It participates in lipid metabolism; mycolic acid biosynthesis. Functionally, involved in the biosynthesis of methoxymycolic acid. It catalyzes the O-methylation of the hydroxy group of the hydroxymycolate to form a methyl ether. The sequence is that of Methoxy mycolic acid synthase MmaA3 (cmaB) from Mycobacterium bovis (strain ATCC BAA-935 / AF2122/97).